Here is a 455-residue protein sequence, read N- to C-terminus: DNA N(6)-methyladenine demethylase ALKBH1C (455 aa).

Disordered regions lie at residues 1–114 (MNHS…AGDN) and 173–194 (SSVE…SNES). The region spanning 345-455 (LPDICIVNFY…GRLNLTFRQY (111 aa)) is the Fe2OG dioxygenase domain. 352-354 (NFY) is a 2-oxoglutarate binding site. Fe cation is bound by residues histidine 363, aspartate 365, and histidine 423. 2-oxoglutarate is bound at residue 447-453 (RLNLTFR).

This sequence belongs to the alkB family. Fe(2+) serves as cofactor. As to expression, expressed at low levels in roots and seedlings, but barely in cauline leaves, rosette leaves, stems, siliques and flowers.

It localises to the nucleus. The protein resides in the cytoplasm. The enzyme catalyses an N(6)-methyl-2'-deoxyadenosine in DNA + 2-oxoglutarate + O2 = a 2'-deoxyadenosine in DNA + formaldehyde + succinate + CO2. Dioxygenase that catalyzes DNA N(6)-methyladenine (6 mA) demethylation with a low efficiency. The protein is DNA N(6)-methyladenine demethylase ALKBH1C of Arabidopsis thaliana (Mouse-ear cress).